Reading from the N-terminus, the 260-residue chain is Serine protease VLSP-1 (260 aa).

Residues 1-18 (MVLIRVLANLLVLHLSYA) form the signal peptide. Residues 19–24 (QKSSEL) constitute a propeptide that is removed on maturation. Positions 25–251 (VIGGDECNIN…YSDWIQSIIA (227 aa)) constitute a Peptidase S1 domain. 6 disulfide bridges follow: Cys-31-Cys-165, Cys-52-Cys-68, Cys-100-Cys-258, Cys-144-Cys-212, Cys-176-Cys-191, and Cys-202-Cys-227. An N-linked (GlcNAc...) asparagine glycan is attached at Asn-44. Catalysis depends on His-67, which acts as the Charge relay system. A glycan (N-linked (GlcNAc...) asparagine) is linked at Asn-103. Asp-112 acts as the Charge relay system in catalysis. Asn-156 carries an N-linked (GlcNAc...) asparagine glycan. Ser-206 acts as the Charge relay system in catalysis.

The protein belongs to the peptidase S1 family. Snake venom subfamily. As to expression, expressed by the venom gland.

The protein resides in the secreted. Its function is as follows. Snake venom serine protease that may act in the hemostasis system of the prey. This is Serine protease VLSP-1 from Macrovipera lebetinus (Levantine viper).